We begin with the raw amino-acid sequence, 100 residues long: DNA-binding protein HU (100 aa).

Belongs to the bacterial histone-like protein family.

Histone-like DNA-binding protein which is capable of wrapping DNA to stabilize it, and thus to prevent its denaturation under extreme environmental conditions. The polypeptide is DNA-binding protein HU (hup) (Synechocystis sp. (strain ATCC 27184 / PCC 6803 / Kazusa)).